Reading from the N-terminus, the 276-residue chain is Eukaryotic translation initiation factor 3 subunit G (276 aa).

At S148 the chain carries Phosphoserine. Residues 195-274 form the RRM domain; the sequence is TTLKISQLNS…LILHLEWSKK (80 aa).

It belongs to the eIF-3 subunit G family. In terms of assembly, component of the eukaryotic translation initiation factor 3 (eIF-3) complex.

It is found in the cytoplasm. RNA-binding component of the eukaryotic translation initiation factor 3 (eIF-3) complex, which is involved in protein synthesis of a specialized repertoire of mRNAs and, together with other initiation factors, stimulates binding of mRNA and methionyl-tRNAi to the 40S ribosome. The eIF-3 complex specifically targets and initiates translation of a subset of mRNAs involved in cell proliferation. This subunit can bind 18S rRNA. The polypeptide is Eukaryotic translation initiation factor 3 subunit G (Debaryomyces hansenii (strain ATCC 36239 / CBS 767 / BCRC 21394 / JCM 1990 / NBRC 0083 / IGC 2968) (Yeast)).